We begin with the raw amino-acid sequence, 126 residues long: Aspartate 1-decarboxylase (126 aa).

Catalysis depends on S25, which acts as the Schiff-base intermediate with substrate; via pyruvic acid. S25 carries the pyruvic acid (Ser) modification. T57 is a binding site for substrate. The Proton donor role is filled by Y58. 73-75 (GAA) contributes to the substrate binding site.

The protein belongs to the PanD family. In terms of assembly, heterooctamer of four alpha and four beta subunits. Requires pyruvate as cofactor. Is synthesized initially as an inactive proenzyme, which is activated by self-cleavage at a specific serine bond to produce a beta-subunit with a hydroxyl group at its C-terminus and an alpha-subunit with a pyruvoyl group at its N-terminus.

The protein resides in the cytoplasm. The enzyme catalyses L-aspartate + H(+) = beta-alanine + CO2. It participates in cofactor biosynthesis; (R)-pantothenate biosynthesis; beta-alanine from L-aspartate: step 1/1. Functionally, catalyzes the pyruvoyl-dependent decarboxylation of aspartate to produce beta-alanine. The chain is Aspartate 1-decarboxylase from Acetivibrio thermocellus (strain ATCC 27405 / DSM 1237 / JCM 9322 / NBRC 103400 / NCIMB 10682 / NRRL B-4536 / VPI 7372) (Clostridium thermocellum).